Consider the following 524-residue polypeptide: Probable glutamyl-tRNA reductase 3, chloroplastic (524 aa).

Residues 1-52 (MAVSNASVVLSPNLETSSSWYHHNPSSSLDLIRIHTLPMNKMTRRGLIQRVR) constitute a chloroplast transit peptide. Residues 129–132 (TCNR), serine 189, 194–196 (ENQ), and glutamine 200 each bind substrate. Cysteine 130 functions as the Nucleophile in the catalytic mechanism. 269–274 (GAGEMG) provides a ligand contact to NADP(+).

It belongs to the glutamyl-tRNA reductase family.

It localises to the plastid. Its subcellular location is the chloroplast. It catalyses the reaction (S)-4-amino-5-oxopentanoate + tRNA(Glu) + NADP(+) = L-glutamyl-tRNA(Glu) + NADPH + H(+). It participates in porphyrin-containing compound metabolism; protoporphyrin-IX biosynthesis; 5-aminolevulinate from L-glutamyl-tRNA(Glu): step 1/2. It functions in the pathway porphyrin-containing compound metabolism; chlorophyll biosynthesis. Its function is as follows. Catalyzes the NADPH-dependent reduction of glutamyl-tRNA(Glu) to glutamate 1-semialdehyde (GSA). The sequence is that of Probable glutamyl-tRNA reductase 3, chloroplastic (HEMA3) from Arabidopsis thaliana (Mouse-ear cress).